The primary structure comprises 655 residues: MERKVLALQARKKRTKAKKDKAQRKSETQHRGSAPHSESDLPEQEEEILGSDDDEQEDPNDYCKGGYHLVKIGDLFNGRYHVIRKLGWGHFSTVWLSWDIQGKKFVAMKVVKSAEHYTETALDEIRLLKSVRNSDPNDPNREMVVQLLDDFKISGVNGTHICMVFEVLGHHLLKWIIKSNYQGLPLPCVKKIIQQVLQGLDYLHTKCRIIHTDIKPENILLSVNEQYIRRLAAEATEWQRSGAPPPSGSAVSTAPQPKPADKMSKNKKKKLKKKQKRQAELLEKRMQEIEEMEKESGPGQKRPNKQEESESPVERPLKENPPNKMTQEKLEESSTIGQDQTLMERDTEGGAAEINCNGVIEVINYTQNSNNETLRHKEDLHNANDCDVQNLNQESSFLSSQNGDSSTSQETDSCTPITSEVSDTMVCQSSSTVGQSFSEQHISQLQESIRAEIPCEDEQEQEHNGPLDNKGKSTAGNFLVNPLEPKNAEKLKVKIADLGNACWVHKHFTEDIQTRQYRSLEVLIGSGYNTPADIWSTACMAFELATGDYLFEPHSGEEYTRDEDHIALIIELLGKVPRKLIVAGKYSKEFFTKKGDLKHITKLKPWGLFEVLVEKYEWSQEEAAGFTDFLLPMLELIPEKRATAAECLRHPWLNS.

A disordered region spans residues 1-57; it reads MERKVLALQARKKRTKAKKDKAQRKSETQHRGSAPHSESDLPEQEEEILGSDDDEQE. Residues 10–22 show a composition bias toward basic residues; sequence ARKKRTKAKKDKA. Residues 40–57 show a composition bias toward acidic residues; that stretch reads DLPEQEEEILGSDDDEQE. Residue serine 51 is modified to Phosphoserine; by CK2. In terms of domain architecture, Protein kinase spans 80–653; it reads YHVIRKLGWG…AAECLRHPWL (574 aa). ATP is bound by residues 86 to 94, lysine 109, and 166 to 168; these read LGWGHFSTV and EVL. The active-site Proton acceptor is aspartate 213. Disordered stretches follow at residues 238 to 341 and 397 to 417; these read WQRS…QDQT and FLSSQNGDSSTSQETDSCTPI. The segment covering 265-276 has biased composition (basic residues); sequence KNKKKKLKKKQK. Composition is skewed to basic and acidic residues over residues 277-288 and 304-318; these read RQAELLEKRMQE and NKQEESESPVERPLK. A phosphoserine mark is found at serine 309, serine 311, and serine 333. Phosphoserine; by CK2 is present on serine 555.

The protein belongs to the protein kinase superfamily. CMGC Ser/Thr protein kinase family. Monomer. Isoform 2 is found in a multisubunit complex containing seven proteins, named toposome, which separates entangled circular chromatin DNA during chromosome segregation. Isoform 2 interacts with DNAJC8 and AHSA1/AHA1 and this mediates formation of a complex with the Hsp70 /Hsp90 machinery. Isoform 1 is found in a complex with: DHX9, MOV10, MATR3, HNRNPU, NCL, DDX21, HSD17B4, PABPC1, HNRNPM, IGF2BP1, SYNCRIP, RPL3, VIM, YBX1, NPM1, HNRNPA2B1, HNRNPC, RPLP0, RPL7A and RALY. Isoform 2 binds to IGF2BP1, SYNCRIP, HNRNPA2B1 and HNRNPC. Isoform 1 and isoform 2 interact with SAFB which inhibits its activity. Isoform 2 interacts with SAFB2 which inhibits its activity. In terms of assembly, (Microbial infection) Isoform 2 interacts with HHV-1 ICP27 protein. It depends on Mg(2+) as a cofactor. As to expression, isoform 2 is predominantly expressed in the testis but is also present at lower levels in heart, ovary, small intestine, liver, kidney, pancreas and skeletal muscle. Isoform 1 is only seen in the testis, at lower levels than isoform 2. Highly expressed in different erythroid and lymphoid cell lines, with isoform 2 being far more abundant than isoform 1.

The protein localises to the cytoplasm. It is found in the nucleus. It localises to the nucleus matrix. Its subcellular location is the microsome. The protein resides in the nucleoplasm. The protein localises to the nucleus speckle. It is found in the chromosome. The catalysed reaction is L-seryl-[protein] + ATP = O-phospho-L-seryl-[protein] + ADP + H(+). It carries out the reaction L-threonyl-[protein] + ATP = O-phospho-L-threonyl-[protein] + ADP + H(+). Activated by phosphorylation on Ser-51 and Ser-555. Functionally, serine/arginine-rich protein-specific kinase which specifically phosphorylates its substrates at serine residues located in regions rich in arginine/serine dipeptides, known as RS domains and is involved in the phosphorylation of SR splicing factors and the regulation of splicing. Plays a central role in the regulatory network for splicing, controlling the intranuclear distribution of splicing factors in interphase cells and the reorganization of nuclear speckles during mitosis. Can influence additional steps of mRNA maturation, as well as other cellular activities, such as chromatin reorganization in somatic and sperm cells and cell cycle progression. Isoform 2 phosphorylates SFRS2, ZRSR2, LBR and PRM1. Isoform 2 phosphorylates SRSF1 using a directional (C-terminal to N-terminal) and a dual-track mechanism incorporating both processive phosphorylation (in which the kinase stays attached to the substrate after each round of phosphorylation) and distributive phosphorylation steps (in which the kinase and substrate dissociate after each phosphorylation event). The RS domain of SRSF1 binds first to a docking groove in the large lobe of the kinase domain of SRPK1. This induces certain structural changes in SRPK1 and/or RRM2 domain of SRSF1, allowing RRM2 to bind the kinase and initiate phosphorylation. The cycles continue for several phosphorylation steps in a processive manner (steps 1-8) until the last few phosphorylation steps (approximately steps 9-12). During that time, a mechanical stress induces the unfolding of the beta-4 motif in RRM2, which then docks at the docking groove of SRPK1. This also signals RRM2 to begin to dissociate, which facilitates SRSF1 dissociation after phosphorylation is completed. Isoform 2 can mediate hepatitis B virus (HBV) core protein phosphorylation. It plays a negative role in the regulation of HBV replication through a mechanism not involving the phosphorylation of the core protein but by reducing the packaging efficiency of the pregenomic RNA (pgRNA) without affecting the formation of the viral core particles. Isoform 1 and isoform 2 can induce splicing of exon 10 in MAPT/TAU. The ratio of isoform 1/isoform 2 plays a decisive role in determining cell fate in K-562 leukaemic cell line: isoform 2 favors proliferation where as isoform 1 favors differentiation. This is SRSF protein kinase 1 from Homo sapiens (Human).